Consider the following 650-residue polypeptide: Glycoprotein antigen BM86 (650 aa).

A signal peptide spans 1–19 (MRGIALFVAAVSLIVEGTA). 2 EGF-like domains span residues 20 to 66 (ESSI…KQCE) and 67 to 104 (YKDT…LQCK). Disulfide bonds link C24–C37, C32–C49, C51–C65, C71–C81, C76–C91, and C93–C103. N-linked (GlcNAc...) asparagine glycosylation is found at N141 and N182. EGF-like domains follow at residues 205-247 (CINA…ITCK), 251-292 (HTVS…DTCI), and 291-335 (CISD…NECL). 9 cysteine pairs are disulfide-bonded: C209-C222, C218-C231, C233-C246, C255-C269, C263-C278, C280-C291, C295-C307, C300-C316, and C318-C334. N-linked (GlcNAc...) asparagine glycosylation is found at N348 and N382. 2 EGF-like domains span residues 482–530 (RRSV…IGCI) and 531–568 (ERTT…HECY). 6 disulfides stabilise this stretch: C486–C500, C492–C516, C518–C529, C535–C550, C543–C559, and C561–C567. The segment at 603-628 (KSEATTAATTTTKAKDKDPDPGKSSA) is disordered. S627 carries GPI-anchor amidated serine lipidation. Residues 628-650 (AAAVSATGLLLLLAATSVTAASL) constitute a propeptide, removed in mature form.

It localises to the cell membrane. In Rhipicephalus microplus (Cattle tick), this protein is Glycoprotein antigen BM86.